The primary structure comprises 581 residues: Sulfate adenylyltransferase (581 aa).

Residues 1-176 (MANAPHGGVL…VQAIQAPTHF (176 aa)) are N-terminal. Residues 177 to 401 (DYVPLRYTPA…LRESYPPRPQ (225 aa)) are catalytic. Q204 provides a ligand contact to sulfate. ATP contacts are provided by residues 204-207 (QTRN) and 298-301 (GRDH). Residues T205, R206, and N207 contribute to the active site. Sulfate is bound at residue R206. Residue A302 participates in sulfate binding. ATP is bound at residue M340. Residues 402–581 (QGFTILLTGL…IMILESQNLV (180 aa)) are allosteric regulation domain; adenylyl-sulfate kinase-like. 3'-phosphoadenylyl sulfate contacts are provided by residues 441-444 (EELR), 486-487 (TA), and R526.

This sequence in the N-terminal section; belongs to the sulfate adenylyltransferase family. In the C-terminal section; belongs to the APS kinase family. As to quaternary structure, homohexamer. Dimer of trimers.

The protein localises to the cytoplasm. The catalysed reaction is sulfate + ATP + H(+) = adenosine 5'-phosphosulfate + diphosphate. Its pathway is sulfur metabolism; hydrogen sulfide biosynthesis; sulfite from sulfate: step 1/3. Its activity is regulated as follows. Allosterically inhibited by 3'-phosphoadenosine 5'-phosphosulfate (PAPS). Catalyzes the first intracellular reaction of sulfate assimilation, forming adenosine-5'-phosphosulfate (APS) from inorganic sulfate and ATP. Plays an important role in sulfate activation as a component of the biosynthesis pathway of sulfur-containing amino acids. This is Sulfate adenylyltransferase from Cryptococcus neoformans var. grubii serotype A (strain H99 / ATCC 208821 / CBS 10515 / FGSC 9487) (Filobasidiella neoformans var. grubii).